The chain runs to 305 residues: Ribonuclease Z (305 aa).

Residues histidine 63, histidine 65, aspartate 67, histidine 68, histidine 142, aspartate 209, and histidine 267 each coordinate Zn(2+). Aspartate 67 (proton acceptor) is an active-site residue.

It belongs to the RNase Z family. As to quaternary structure, homodimer. Zn(2+) serves as cofactor.

It catalyses the reaction Endonucleolytic cleavage of RNA, removing extra 3' nucleotides from tRNA precursor, generating 3' termini of tRNAs. A 3'-hydroxy group is left at the tRNA terminus and a 5'-phosphoryl group is left at the trailer molecule.. In terms of biological role, zinc phosphodiesterase, which displays some tRNA 3'-processing endonuclease activity. Probably involved in tRNA maturation, by removing a 3'-trailer from precursor tRNA. The polypeptide is Ribonuclease Z (Nocardia farcinica (strain IFM 10152)).